Reading from the N-terminus, the 138-residue chain is Growth factor (138 aa).

The first 19 residues, 1-19 (MSMKYLMLLFAAMIIRSFA), serve as a signal peptide directing secretion. Residue N34 is glycosylated (N-linked (GlcNAc...) asparagine; by host). Residues 41 to 81 (AIRLCGPEGDGYCLHGDCIHARDIDGMYCRCSHGYTGIRCQ) enclose the EGF-like domain. Disulfide bonds link C45/C58, C53/C69, and C71/C80. N95 is a glycosylation site (N-linked (GlcNAc...) asparagine; by host).

Belongs to the orthopoxvirus OPG019 family.

It localises to the secreted. In terms of biological role, stimulates cellular proliferation (hyperplasia)and mobility around infected cells to promote rapid and efficient spread of infection. The polypeptide is Growth factor (OPG019) (Rabbitpox virus (strain Utrecht) (RPV)).